Consider the following 116-residue polypeptide: MAMKIRLARGGSKKRPHYSIVASDSRMPRDGRFLEKLGTYNPLLAKDSEDRIKMNVERVQYWLSQGAQPTDRVARFLEAAGLKEKAVRNNPKAAVPGKRMAELAKKKAERAAASAE.

The tract at residues 88–116 (RNNPKAAVPGKRMAELAKKKAERAAASAE) is disordered. A compositionally biased stretch (basic and acidic residues) spans 99 to 110 (RMAELAKKKAER).

Belongs to the bacterial ribosomal protein bS16 family.

In Cereibacter sphaeroides (strain ATCC 17025 / ATH 2.4.3) (Rhodobacter sphaeroides), this protein is Small ribosomal subunit protein bS16.